The following is a 374-amino-acid chain: RNA binding protein fox-1 homolog 3 (374 aa).

A compositionally biased stretch (pro residues) spans 1 to 29 (MAQPYPPAQYPPPPQNGIPAEYAPPPPHP). Residues 1 to 105 (MAQPYPPAQY…QQPKRLHVSN (105 aa)) are disordered. The span at 49-74 (TPAQTHPEQPGTEASTQPIAGTQTVP) shows a compositional bias: polar residues. Residues 99 to 175 (KRLHVSNIPF…RKIEVNNATA (77 aa)) form the RRM domain. Position 223 is an asymmetric dimethylarginine; alternate (Arg-223). Omega-N-methylarginine; alternate is present on Arg-223. Residue Arg-319 is modified to Asymmetric dimethylarginine.

Phosphorylated. As to expression, widely expressed in brain, including in cerebral cortex, hippocampus, thalamus, caudate/putamen, cerebellum, as well as in the spinal cord (at protein level). Not expressed in all neuronal cells within a region, in cerebellum, expression is absent in Purkinje cells (at protein level). Expressed in the retina in the ganglion cells and some cells in the inner nuclear layer, but absent from the photoreceptor cells and most cells in the inner nuclear layer (at protein level).

It localises to the nucleus. The protein localises to the cytoplasm. In terms of biological role, pre-mRNA alternative splicing regulator. Regulates alternative splicing of RBFOX2 to enhance the production of mRNA species that are targeted for nonsense-mediated decay (NMD). The sequence is that of RNA binding protein fox-1 homolog 3 (Rbfox3) from Mus musculus (Mouse).